The sequence spans 273 residues: 2,3,4,5-tetrahydropyridine-2,6-dicarboxylate N-succinyltransferase (273 aa).

Residues arginine 104 and aspartate 141 each contribute to the substrate site.

The protein belongs to the transferase hexapeptide repeat family. In terms of assembly, homotrimer.

Its subcellular location is the cytoplasm. The catalysed reaction is (S)-2,3,4,5-tetrahydrodipicolinate + succinyl-CoA + H2O = (S)-2-succinylamino-6-oxoheptanedioate + CoA. The protein operates within amino-acid biosynthesis; L-lysine biosynthesis via DAP pathway; LL-2,6-diaminopimelate from (S)-tetrahydrodipicolinate (succinylase route): step 1/3. The sequence is that of 2,3,4,5-tetrahydropyridine-2,6-dicarboxylate N-succinyltransferase from Neisseria meningitidis serogroup A / serotype 4A (strain DSM 15465 / Z2491).